The following is a 793-amino-acid chain: Cation channel sperm-associated auxiliary subunit delta (793 aa).

The signal sequence occupies residues 1 to 20 (MLMLMLVAAVTMWLRPLVTA). Residues 21–725 (QPLCRARTVR…AFPVQLVSAG (705 aa)) are Extracellular-facing. Disulfide bonds link Cys-24–Cys-370, Cys-60–Cys-146, Cys-145–Cys-153, Cys-388–Cys-497, Cys-511–Cys-703, Cys-526–Cys-573, and Cys-625–Cys-653. N-linked (GlcNAc...) asparagine glycosylation is present at Asn-128. N-linked (GlcNAc...) asparagine glycosylation is found at Asn-231, Asn-241, Asn-473, Asn-539, and Asn-631. A helical membrane pass occupies residues 726-747 (VVMVLLISSILGSVWLAYMIPR). Over 748–793 (LLRTARGRRMTSFVAQLYGRCKTVCQFRASATARTGSKPMGRHRSS) the chain is Cytoplasmic.

It belongs to the CATSPERD family. In terms of assembly, component of the CatSper complex or CatSpermasome composed of the core pore-forming members CATSPER1, CATSPER2, CATSPER3 and CATSPER4 as well as auxiliary members CATSPERB, CATSPERG, CATSPERD, CATSPERE, CATSPERZ, C2CD6/CATSPERT, TMEM249, TMEM262 and EFCAB9. HSPA1 may be an additional auxiliary complex member. The core complex members CATSPER1, CATSPER2, CATSPER3 and CATSPER4 form a heterotetrameric channel. The auxiliary CATSPERB, CATSPERG, CATSPERD and CATSPERE subunits form a pavilion-like structure over the pore which stabilizes the complex through interactions with CATSPER4, CATSPER3, CATSPER1 and CATSPER2 respectively. TMEM262/CATSPERH interacts with CATSPERB, further stabilizing the complex. C2CD6/CATSPERT interacts at least with CATSPERD and is required for targeting the CatSper complex in the flagellar membrane.

Its subcellular location is the cell projection. The protein localises to the cilium. It localises to the flagellum membrane. Functionally, auxiliary component of the CatSper complex, a complex involved in sperm cell hyperactivation. Sperm cell hyperactivation is needed for sperm motility which is essential late in the preparation of sperm for fertilization. Required for CATSPER1 stability before intraflagellar transport and/or incorporation of the CatSper complex channel into the flagellar membrane. This is Cation channel sperm-associated auxiliary subunit delta from Macaca fascicularis (Crab-eating macaque).